Here is a 611-residue protein sequence, read N- to C-terminus: Glutamine--fructose-6-phosphate aminotransferase [isomerizing] (611 aa).

The active-site Nucleophile; for GATase activity is Cys2. In terms of domain architecture, Glutamine amidotransferase type-2 spans 2 to 219 (CGIVGGVSKT…DGDVAMLQRQ (218 aa)). 2 consecutive SIS domains span residues 287-427 (AAAM…APGA) and 460-601 (WAAR…VDRP). The For Fru-6P isomerization activity role is filled by Lys606.

Homodimer.

The protein localises to the cytoplasm. It catalyses the reaction D-fructose 6-phosphate + L-glutamine = D-glucosamine 6-phosphate + L-glutamate. Its function is as follows. Catalyzes the first step in hexosamine metabolism, converting fructose-6P into glucosamine-6P using glutamine as a nitrogen source. This is Glutamine--fructose-6-phosphate aminotransferase [isomerizing] from Acidithiobacillus ferridurans.